The following is a 301-amino-acid chain: Protoheme IX farnesyltransferase (301 aa).

The next 9 membrane-spanning stretches (helical) occupy residues 29–49 (VVAL…PGVV), 51–71 (IVPL…AAAF), 96–118 (VSIA…VLYV), 123–143 (LTAW…TAYL), 151–171 (IVVG…AVTG), 177–197 (ALLL…ALAI), 223–243 (CIFL…LVGM), 244–264 (CGPV…YKAW), and 281–301 (FSIY…YLWL).

The protein belongs to the UbiA prenyltransferase family. Protoheme IX farnesyltransferase subfamily.

It is found in the cell inner membrane. The enzyme catalyses heme b + (2E,6E)-farnesyl diphosphate + H2O = Fe(II)-heme o + diphosphate. Its pathway is porphyrin-containing compound metabolism; heme O biosynthesis; heme O from protoheme: step 1/1. In terms of biological role, converts heme B (protoheme IX) to heme O by substitution of the vinyl group on carbon 2 of heme B porphyrin ring with a hydroxyethyl farnesyl side group. This is Protoheme IX farnesyltransferase from Shewanella halifaxensis (strain HAW-EB4).